A 402-amino-acid polypeptide reads, in one-letter code: Argininosuccinate synthase (402 aa).

7–15 (LYSGGLDTS) provides a ligand contact to ATP. An L-citrulline-binding site is contributed by Tyr83. Gly113 contributes to the ATP binding site. Residues Thr115, Asn119, and Asp120 each coordinate L-aspartate. Asn119 contacts L-citrulline. L-citrulline-binding residues include Arg123, Ser169, Ser178, Glu253, and Tyr265.

The protein belongs to the argininosuccinate synthase family. Type 1 subfamily. In terms of assembly, homotetramer.

It localises to the cytoplasm. It carries out the reaction L-citrulline + L-aspartate + ATP = 2-(N(omega)-L-arginino)succinate + AMP + diphosphate + H(+). The protein operates within amino-acid biosynthesis; L-arginine biosynthesis; L-arginine from L-ornithine and carbamoyl phosphate: step 2/3. In Thermoplasma acidophilum (strain ATCC 25905 / DSM 1728 / JCM 9062 / NBRC 15155 / AMRC-C165), this protein is Argininosuccinate synthase.